The primary structure comprises 434 residues: Indole diterpene prenyltransferase nodD2 (434 aa).

L-tryptophan-binding positions include 85-86 (LI) and Glu94. Substrate-binding residues include Arg107, Lys194, Arg268, Lys270, Tyr272, Gln351, Tyr353, Tyr418, and Tyr422.

It belongs to the tryptophan dimethylallyltransferase family.

It functions in the pathway secondary metabolite biosynthesis. Indole diterpene prenyltransferase; part of the gene cluster that mediates the biosynthesis of the indole diterpenes nodulisporic acids (NA). Nodulisporic acid A (NAA) and its chemically modified derivatives are of particular significance because of their highly potent insecticidal activity against blood-feeding arthropods and lack of observable adverse effects on mammals, in particular the tremogenicity associated with the paspaline-derived IDTs is not observed. The geranylgeranyl diphosphate (GGPP) synthase ggs1, localized outside of the cluster, is proposed to catalyze the first step in nodulisporic acid biosynthesis via conversion of farnesyl pyrophosphate and isopentyl pyrophosphate into geranylgeranyl pyrophosphate (GGPP). Condensation of indole-3-glycerol phosphate with GGPP by the prenyl transferase nodC then forms 3-geranylgeranylindole (3-GGI). Epoxidation by the FAD-dependent monooxygenase nodM leads to a single-epoxidized-GGI that is substrate of the terpene cyclase nodB for cyclization to yield emindole SB. The terminal methyl carbon, C28, of emindole SB is then oxidized by the cytochrome P450 monooxygenase nodW to produce nodulisporic acid F (NAF), the pentacyclic core of NAA. NAF is converted to nodulisporic acid E (NAE) via prenylation. This step is probably performed by one of the indole diterpene prenyltransferases nodD1 or nodD2. Several oxidation steps performed by the FAD-linked oxidoreductase nodO and one of the cytochrome P450 monooxygenase nodR, nodX or nodZ further convert NAE to nodulisporic acid D (NAD). NAD is substrate of cytochrome P450 monooxygenase nodJ to produce the precursor of nodulisporic acid C (NAC), converted to NAC by one of the indole diterpene prenyltransferases nodD1 or nodD2. The FAD-dependent monooxygenase nodY2 then oxidizes NAC to nodulisporic acid B (NAB). Finally NAB is converted to NAA by one of the cytochrome P450 monooxygenases nodR, nodX or nodZ. The polypeptide is Indole diterpene prenyltransferase nodD2 (Hypoxylon pulicicidum).